The chain runs to 85 residues: Progonadoliberin-2 (85 aa).

The N-terminal stretch at 1–23 (MCVSRLALLLGLLLCVGAQLSFA) is a signal peptide. Gln24 bears the Pyrrolidone carboxylic acid mark. The residue at position 33 (Gly33) is a Glycine amide.

It belongs to the GnRH family. Expressed in only one cell group in the mesencephalon.

The protein resides in the secreted. Functionally, stimulates the secretion of gonadotropins. The sequence is that of Progonadoliberin-2 (gnrh2) from Haplochromis burtoni (Burton's mouthbrooder).